A 279-amino-acid chain; its full sequence is Thymidylate synthase (279 aa).

133-134 (RR) provides a ligand contact to dUMP. C154 acts as the Nucleophile in catalysis. Residues 178–181 (RSND), N189, and 219–221 (HIY) contribute to the dUMP site. D181 provides a ligand contact to (6R)-5,10-methylene-5,6,7,8-tetrahydrofolate. A (6R)-5,10-methylene-5,6,7,8-tetrahydrofolate-binding site is contributed by A278.

It belongs to the thymidylate synthase family. Bacterial-type ThyA subfamily. In terms of assembly, homodimer.

The protein localises to the cytoplasm. It carries out the reaction dUMP + (6R)-5,10-methylene-5,6,7,8-tetrahydrofolate = 7,8-dihydrofolate + dTMP. It participates in pyrimidine metabolism; dTTP biosynthesis. Functionally, catalyzes the reductive methylation of 2'-deoxyuridine-5'-monophosphate (dUMP) to 2'-deoxythymidine-5'-monophosphate (dTMP) while utilizing 5,10-methylenetetrahydrofolate (mTHF) as the methyl donor and reductant in the reaction, yielding dihydrofolate (DHF) as a by-product. This enzymatic reaction provides an intracellular de novo source of dTMP, an essential precursor for DNA biosynthesis. The polypeptide is Thymidylate synthase (Streptococcus gordonii (strain Challis / ATCC 35105 / BCRC 15272 / CH1 / DL1 / V288)).